We begin with the raw amino-acid sequence, 204 residues long: Dual specificity protein phosphatase 18 (204 aa).

The region spanning 19–160 is the Tyrosine-protein phosphatase domain; it reads GLSQITKSLF…LIHYEFQLFG (142 aa). The interval 95-141 is sufficient for mitochondrial localization; that stretch reads MKQGRTLLHCAAGVSRSAALCLAYLMKYHVMSLLDAHAWTKSRRPII. Cys104 (phosphocysteine intermediate) is an active-site residue.

The protein belongs to the protein-tyrosine phosphatase family. Non-receptor class dual specificity subfamily.

Its subcellular location is the cytoplasm. It localises to the nucleus. The protein resides in the mitochondrion inner membrane. The catalysed reaction is O-phospho-L-tyrosyl-[protein] + H2O = L-tyrosyl-[protein] + phosphate. It catalyses the reaction O-phospho-L-seryl-[protein] + H2O = L-seryl-[protein] + phosphate. It carries out the reaction O-phospho-L-threonyl-[protein] + H2O = L-threonyl-[protein] + phosphate. Functionally, can dephosphorylate single and diphosphorylated synthetic MAPK peptides, with preference for the phosphotyrosine and diphosphorylated forms over phosphothreonine. In vitro, dephosphorylates p-nitrophenyl phosphate (pNPP). This is Dual specificity protein phosphatase 18 (Dusp18) from Rattus norvegicus (Rat).